A 426-amino-acid chain; its full sequence is Selenate reductase subunit C (426 aa).

10 helical membrane passes run 5–25 (LYFT…YIRL), 40–60 (WGLW…SFLL), 78–98 (LALF…LIDL), 119–139 (WEIQ…WFLM), 187–207 (ILGI…GSLF), 223–243 (IIFL…LYSF), 261–281 (LLTL…LIGL), 302–322 (FIFW…LITI), 330–350 (MGLA…ILVI), and 385–405 (VGLI…VPVF).

Belongs to the NrfD family. The complex is composed of three subunits: SrdA, SrdB and SrdC.

The protein resides in the cell membrane. The enzyme catalyses selenite + a quinone + H2O = selenate + a quinol. Functionally, component of the respiratory selenate reductase complex, which catalyzes the reduction of selenate to selenite. This subunit probably receives electrons directly from the membrane quinone pool and transfers the electrons to the iron-sulfur clusters of SrdB. May be the membrane anchor protein subunit of the complex. In Mesobacillus selenatarsenatis (strain DSM 18680 / JCM 14380 / FERM P-15431 / SF-1), this protein is Selenate reductase subunit C.